The primary structure comprises 61 residues: Potassium channel toxin alpha-KTx 6.6 (61 aa).

The first 23 residues, 1-23 (MNAKFILLLLVVATTMLLPDTQG), serve as a signal peptide directing secretion. Cystine bridges form between Cys-29/Cys-50, Cys-35/Cys-55, Cys-39/Cys-57, and Cys-45/Cys-60. Residue Cys-60 is modified to Cysteine amide.

It belongs to the short scorpion toxin superfamily. Potassium channel inhibitor family. Alpha-KTx 06 subfamily. In terms of tissue distribution, expressed by the venom gland.

The protein localises to the secreted. Functionally, blocker of voltage-gated potassium channels. The polypeptide is Potassium channel toxin alpha-KTx 6.6 (Opistophthalmus carinatus (African yellow leg scorpion)).